Consider the following 286-residue polypeptide: Bark agglutinin I polypeptide B (286 aa).

A signal peptide spans 1–31; it reads MASYKFKTQNSFLLLLSISFFFLLLLNKVNS. Asparagine 148 is a glycosylation site (N-linked (GlcNAc...) asparagine). Glutamate 157 and aspartate 159 together coordinate Mn(2+). Ca(2+) contacts are provided by aspartate 159, asparagine 163, and aspartate 167. Mn(2+) is bound by residues aspartate 167 and histidine 172.

The protein belongs to the leguminous lectin family. In terms of assembly, RPbAI is composed of two polypeptides, A and B, that associate into five different tetrameric isolectins. The A4 combination is the only one devoid of agglutination activity. Isoform B4 displays maximal agglutination activity. Mostly in the axial and ray parenchymal cells of the inner bark. Fewer in the axial and ray parenchymal cells of the xylem. Strong expression in bark. The lectin accumulates in the inner bark in autumn and winter and disappears in may.

Bark lectins are storage proteins that probably maintain stocks of nitrogen during dormant period. Self-aggregatable molecules that can bind their own carbohydrate side chains. They could also play a role in the plant's defense against phytophagous invertebrates or herbivorous higher animals. The chain is Bark agglutinin I polypeptide B from Robinia pseudoacacia (Black locust).